The chain runs to 219 residues: Probable glutathione S-transferase MSR-1 (219 aa).

Residues 4 to 83 (NNVVLLDFSG…YIDEVWHEKC (80 aa)) enclose the GST N-terminal domain. Residues Ser-14, Lys-41, Ile-55, and 67-68 (ES) each bind glutathione. Residues 89 to 208 (DPYQRSQARF…LPHPHKIYDF (120 aa)) form the GST C-terminal domain.

The protein belongs to the GST superfamily. HSP26 family.

It catalyses the reaction RX + glutathione = an S-substituted glutathione + a halide anion + H(+). Its function is as follows. May play an important role in hormonal and growth regulatory responses. This Nicotiana plumbaginifolia (Leadwort-leaved tobacco) protein is Probable glutathione S-transferase MSR-1 (MSR-1).